A 525-amino-acid polypeptide reads, in one-letter code: DNA polymerase epsilon subunit 2 (525 aa).

Belongs to the DNA polymerase epsilon subunit B family. In terms of assembly, component of the epsilon DNA polymerase complex consisting of four subunits: the catalytic subunit PolE1/DNApol-epsilon255 and the accessory subunits PolE2/DNApol-epsilon58, Chrac-14/DNApolE3 and PolE4.

It localises to the nucleus. Accessory component of the DNA polymerase epsilon complex. Participates in DNA repair and in chromosomal DNA replication. Has a role in the entrance and progression through S phase. Has a role in endoreplication. Essential for viability and tissue development. The polypeptide is DNA polymerase epsilon subunit 2 (Drosophila melanogaster (Fruit fly)).